We begin with the raw amino-acid sequence, 603 residues long: Phosphoenolpyruvate carboxykinase [GTP] (603 aa).

Substrate-binding positions include Arg87 and 209–211 (YAG). Lys218 and His237 together coordinate Mn(2+). Residue Ser258 coordinates substrate. 259–264 (GSGKTS) provides a ligand contact to GTP. Residue Ser260 is part of the active site. Asp275 contacts Mn(2+). 365 to 367 (NAR) serves as a coordination point for substrate. GTP is bound by residues Arg367 and Arg398.

It belongs to the phosphoenolpyruvate carboxykinase [GTP] family. The cofactor is Mn(2+).

Its subcellular location is the cytoplasm. The enzyme catalyses oxaloacetate + GTP = phosphoenolpyruvate + GDP + CO2. It functions in the pathway carbohydrate biosynthesis; gluconeogenesis. Catalyzes the conversion of oxaloacetate (OAA) to phosphoenolpyruvate (PEP), the rate-limiting step in the metabolic pathway that produces glucose from lactate and other precursors derived from the citric acid cycle. This is Phosphoenolpyruvate carboxykinase [GTP] from Saccharolobus solfataricus (strain ATCC 35092 / DSM 1617 / JCM 11322 / P2) (Sulfolobus solfataricus).